We begin with the raw amino-acid sequence, 794 residues long: Ubiquitin carboxyl-terminal hydrolase 10 (794 aa).

N-acetylalanine is present on alanine 2. Positions 2–99 (ALHNPQYIFG…ILGCPTSKKT (98 aa)) are interaction with p53/TP53. Residues 6 to 21 (PQYIFGDFSPDEFNQF) form a G3BP1-binding region. Phosphothreonine is present on residues threonine 24 and threonine 99. Residues 123–164 (ESSSNAEAETLENDSGAGGLGQRERKKKKKRPPGYYSYLKDG) are disordered. 3 positions are modified to phosphoserine: serine 209, serine 224, and serine 316. The segment at 303-326 (ESADLDPAKPESQSPPAESALSVS) is disordered. A compositionally biased stretch (polar residues) spans 313-326 (ESQSPPAESALSVS). Serine 332 is modified (phosphoserine; by ATM). A phosphoserine mark is found at serine 361 and serine 366. The USP domain occupies 411–791 (RGLINKGNWC…TAYLLYYRRV (381 aa)). The active-site Nucleophile is cysteine 420. Serine 543 is modified (phosphoserine). The tract at residues 546–588 (HEKHSVSNGPGSHLIEDEELEDTGEGSEDEWEQVGPKNKTSVT) is disordered. Positions 561 to 577 (EDEELEDTGEGSEDEWE) are enriched in acidic residues. Phosphothreonine is present on threonine 568. At serine 572 the chain carries Phosphoserine. Histidine 745 acts as the Proton acceptor in catalysis.

The protein belongs to the peptidase C19 family. USP10 subfamily. Found in a deubiquitination complex with TANK, USP10 and ZC3H12A; this complex inhibits genotoxic stress- or interleukin-1-beta (IL1B)-mediated NF-kappa-B activation by promoting IKBKG or TRAF6 deubiquitination. Interacts with IKBKG; this interaction increases in response to DNA damage. Interacts with TANK; this interaction increases in response to DNA damage. Interacts with TRAF6; this interaction increases in response to DNA damage. Interacts with ZC3H12A; this interaction increases in response to DNA damage. Interacts with G3BP1 (via NTF2 domain) and G3BP2 (via NTF2 domain); inhibiting stress granule formation. Phosphorylated by ATM following DNA damage, leading to stabilization and translocation it to the nucleus. Post-translationally, ubiquitinated. Deubiquitinated by USP13.

The protein resides in the cytoplasm. Its subcellular location is the nucleus. It is found in the early endosome. It carries out the reaction Thiol-dependent hydrolysis of ester, thioester, amide, peptide and isopeptide bonds formed by the C-terminal Gly of ubiquitin (a 76-residue protein attached to proteins as an intracellular targeting signal).. Specifically inhibited by spautin-1 (specific and potent autophagy inhibitor-1), a derivative of MBCQ that binds to USP10 and inhibits deubiquitinase activity. Regulated by PIK3C3/VPS34-containing complexes. Functionally, hydrolase that can remove conjugated ubiquitin from target proteins such as p53/TP53, RPS2/us5, RPS3/us3, RPS10/eS10, BECN1, SNX3 and CFTR. Acts as an essential regulator of p53/TP53 stability: in unstressed cells, specifically deubiquitinates p53/TP53 in the cytoplasm, leading to counteract MDM2 action and stabilize p53/TP53. Following DNA damage, translocates to the nucleus and deubiquitinates p53/TP53, leading to regulate the p53/TP53-dependent DNA damage response. Component of a regulatory loop that controls autophagy and p53/TP53 levels: mediates deubiquitination of BECN1, a key regulator of autophagy, leading to stabilize the PIK3C3/VPS34-containing complexes. In turn, PIK3C3/VPS34-containing complexes regulate USP10 stability, suggesting the existence of a regulatory system by which PIK3C3/VPS34-containing complexes regulate p53/TP53 protein levels via USP10 and USP13. Does not deubiquitinate MDM2. Plays a key role in 40S ribosome subunit recycling when a ribosome has stalled during translation: acts both by inhibiting formation of stress granules, which store stalled translation pre-initiation complexes, and mediating deubiquitination of 40S ribosome subunits. Acts as a negative regulator of stress granules formation by lowering G3BP1 and G3BP2 valence, thereby preventing G3BP1 and G3BP2 ability to undergo liquid-liquid phase separation (LLPS) and assembly of stress granules. Promotes 40S ribosome subunit recycling following ribosome dissociation in response to ribosome stalling by mediating deubiquitination of 40S ribosomal proteins RPS2/us5, RPS3/us3 and RPS10/eS10, thereby preventing their degradation by the proteasome. Part of a ribosome quality control that takes place when ribosomes have stalled during translation initiation (iRQC): USP10 acts by removing monoubiquitination of RPS2/us5 and RPS3/us3, promoting 40S ribosomal subunit recycling. Deubiquitinates CFTR in early endosomes, enhancing its endocytic recycling. Involved in a TANK-dependent negative feedback response to attenuate NF-kappa-B activation via deubiquitinating IKBKG or TRAF6 in response to interleukin-1-beta (IL1B) stimulation or upon DNA damage. Deubiquitinates TBX21 leading to its stabilization. Plays a negative role in the RLR signaling pathway upon RNA virus infection by blocking the RIGI-mediated MAVS activation. Mechanistically, removes the unanchored 'Lys-63'-linked polyubiquitin chains of MAVS to inhibit its aggregation, essential for its activation. This chain is Ubiquitin carboxyl-terminal hydrolase 10 (Usp10), found in Rattus norvegicus (Rat).